The following is a 242-amino-acid chain: Probable transcriptional regulatory protein Bphyt_1301 (242 aa).

It belongs to the TACO1 family.

The protein resides in the cytoplasm. This is Probable transcriptional regulatory protein Bphyt_1301 from Paraburkholderia phytofirmans (strain DSM 17436 / LMG 22146 / PsJN) (Burkholderia phytofirmans).